The following is a 487-amino-acid chain: Glutamyl-tRNA(Gln) amidotransferase subunit A (487 aa).

Catalysis depends on charge relay system residues Lys80 and Ser155. Residue Ser179 is the Acyl-ester intermediate of the active site.

It belongs to the amidase family. GatA subfamily. In terms of assembly, heterotrimer of A, B and C subunits.

It catalyses the reaction L-glutamyl-tRNA(Gln) + L-glutamine + ATP + H2O = L-glutaminyl-tRNA(Gln) + L-glutamate + ADP + phosphate + H(+). Allows the formation of correctly charged Gln-tRNA(Gln) through the transamidation of misacylated Glu-tRNA(Gln) in organisms which lack glutaminyl-tRNA synthetase. The reaction takes place in the presence of glutamine and ATP through an activated gamma-phospho-Glu-tRNA(Gln). This is Glutamyl-tRNA(Gln) amidotransferase subunit A from Leptospira interrogans serogroup Icterohaemorrhagiae serovar Lai (strain 56601).